Reading from the N-terminus, the 589-residue chain is Phenylalanine--tRNA ligase beta subunit (589 aa).

One can recognise a B5 domain in the interval 302–379 (LAYRKEMVRA…IAYGYNNIQM (78 aa)). The Mg(2+) site is built by aspartate 357, aspartate 363, glutamate 366, and aspartate 367.

This sequence belongs to the phenylalanyl-tRNA synthetase beta subunit family. Type 2 subfamily. In terms of assembly, heterotetramer; dimer of two heterodimers formed by FARSA and FARSB. Mg(2+) serves as cofactor.

It localises to the cytoplasm. The enzyme catalyses tRNA(Phe) + L-phenylalanine + ATP = L-phenylalanyl-tRNA(Phe) + AMP + diphosphate + H(+). This Homo sapiens (Human) protein is Phenylalanine--tRNA ligase beta subunit (FARSB).